A 168-amino-acid polypeptide reads, in one-letter code: Xanthine-guanine phosphoribosyltransferase (168 aa).

Residues 43–44 (RG) and 102–110 (DDLVDTGAT) each bind 5-phospho-alpha-D-ribose 1-diphosphate. Residue Asp-103 participates in Mg(2+) binding. Guanine contacts are provided by Asp-106 and Ile-149. Residues Asp-106 and Ile-149 each contribute to the xanthine site. Residues 106-110 (DTGAT) and 148-149 (WI) each bind GMP.

It belongs to the purine/pyrimidine phosphoribosyltransferase family. XGPT subfamily. As to quaternary structure, homotetramer. Requires Mg(2+) as cofactor.

Its subcellular location is the cell inner membrane. The catalysed reaction is GMP + diphosphate = guanine + 5-phospho-alpha-D-ribose 1-diphosphate. The enzyme catalyses XMP + diphosphate = xanthine + 5-phospho-alpha-D-ribose 1-diphosphate. It catalyses the reaction IMP + diphosphate = hypoxanthine + 5-phospho-alpha-D-ribose 1-diphosphate. Its pathway is purine metabolism; GMP biosynthesis via salvage pathway; GMP from guanine: step 1/1. The protein operates within purine metabolism; XMP biosynthesis via salvage pathway; XMP from xanthine: step 1/1. In terms of biological role, purine salvage pathway enzyme that catalyzes the transfer of the ribosyl-5-phosphate group from 5-phospho-alpha-D-ribose 1-diphosphate (PRPP) to the N9 position of the 6-oxopurines guanine and xanthine to form the corresponding ribonucleotides GMP (guanosine 5'-monophosphate) and XMP (xanthosine 5'-monophosphate), with the release of PPi. To a lesser extent, also acts on hypoxanthine. This is Xanthine-guanine phosphoribosyltransferase from Nitrobacter winogradskyi (strain ATCC 25391 / DSM 10237 / CIP 104748 / NCIMB 11846 / Nb-255).